A 749-amino-acid polypeptide reads, in one-letter code: Triacylglycerol lipase 5 (749 aa).

Positions 54-59 match the HXXXXD acyltransferase motif motif; it reads HAISYD. The PNPLA domain occupies 183–388; sequence LVLSGGSTFG…DNDMPISRLS (206 aa). A GXSXG motif is present at residues 214 to 218; that stretch reads GSSAG. The active-site Nucleophile is S216. N-linked (GlcNAc...) asparagine glycosylation is found at N270, N289, N297, N304, and N321. D375 acts as the Proton acceptor in catalysis. N-linked (GlcNAc...) asparagine glycans are attached at residues N474 and N589. The segment at 585 to 643 is disordered; it reads IKSPNKTAAPGRFPLQPLPSPSSTFNKRKMDMLSPSPSPSTSPQRSKSSFTQQGTRQKA. Residues 623–633 show a composition bias toward low complexity; it reads PSTSPQRSKSS. Residues 634 to 643 are compositionally biased toward polar residues; the sequence is FTQQGTRQKA. S645 is modified (phosphoserine). N680, N714, and N742 each carry an N-linked (GlcNAc...) asparagine glycan.

It is found in the lipid droplet. It carries out the reaction a triacylglycerol + H2O = a diacylglycerol + a fatty acid + H(+). The enzyme catalyses 1-(9Z-octadecenoyl)-sn-glycero-3-phosphate + (9Z)-octadecenoyl-CoA = 1,2-di-(9Z-octadecenoyl)-sn-glycero-3-phosphate + CoA. The catalysed reaction is 1-(9Z-octadecenoyl)-sn-glycero-3-phosphate + hexadecanoyl-CoA = 1-hexadecanoyl-2-(9Z-octadecenoyl)-sn-glycero-3-phosphate + CoA. Loses its lipolytic activity in cells lacking nonpolar lipids, but retains its side activity as lysophospholipid acyltransferase. In terms of biological role, lipid particle-localized triacylglycerol (TAG) lipase. The lipid droplet/particle is a lipid storage compartment which serves as a depot of energy and building blocks for membrane lipid biosynthesis. Involved in the mobilization of the non-polar storage lipids triacylglycerols (TAGs) from lipid particles by hydrolysis of TAGs, releasing and supplying specific fatty acids to the appropriate metabolic pathways. Also catalyzes the acylation of lysophosphatidic acid (LPA). The chain is Triacylglycerol lipase 5 (TGL5) from Saccharomyces cerevisiae (strain ATCC 204508 / S288c) (Baker's yeast).